Here is a 1184-residue protein sequence, read N- to C-terminus: Nucleolar protein 6 (1184 aa).

Residues 1 to 10 (MGRIKEKESK) are compositionally biased toward basic and acidic residues. Disordered stretches follow at residues 1–42 (MGRI…NRVP) and 1133–1184 (REQR…NALC).

This sequence belongs to the NRAP family. In terms of assembly, part of the small subunit (SSU) processome, composed of more than 70 proteins and the RNA chaperone small nucleolar RNA (snoRNA) U3.

Its subcellular location is the nucleus. The protein resides in the nucleolus. It is found in the chromosome. Functionally, part of the small subunit (SSU) processome, first precursor of the small eukaryotic ribosomal subunit. During the assembly of the SSU processome in the nucleolus, many ribosome biogenesis factors, an RNA chaperone and ribosomal proteins associate with the nascent pre-rRNA and work in concert to generate RNA folding, modifications, rearrangements and cleavage as well as targeted degradation of pre-ribosomal RNA by the RNA exosome. This Drosophila virilis (Fruit fly) protein is Nucleolar protein 6.